The sequence spans 1207 residues: DNA-directed RNA polymerase subunit beta' (1207 aa).

4 residues coordinate Zn(2+): cysteine 60, cysteine 62, cysteine 75, and cysteine 78. Residues aspartate 450, aspartate 452, and aspartate 454 each coordinate Mg(2+). Zn(2+)-binding residues include cysteine 818, cysteine 892, cysteine 899, and cysteine 902.

Belongs to the RNA polymerase beta' chain family. In terms of assembly, the RNAP catalytic core consists of 2 alpha, 1 beta, 1 beta' and 1 omega subunit. When a sigma factor is associated with the core the holoenzyme is formed, which can initiate transcription. Requires Mg(2+) as cofactor. Zn(2+) serves as cofactor.

The catalysed reaction is RNA(n) + a ribonucleoside 5'-triphosphate = RNA(n+1) + diphosphate. Functionally, DNA-dependent RNA polymerase catalyzes the transcription of DNA into RNA using the four ribonucleoside triphosphates as substrates. The sequence is that of DNA-directed RNA polymerase subunit beta' from Lactococcus lactis subsp. cremoris (strain MG1363).